A 526-amino-acid polypeptide reads, in one-letter code: Cytochrome P450 52A5 (526 aa).

Residues 18–38 traverse the membrane as a helical segment; it reads WYVIVPLAIIIYKVFDYFYVL. Residue Cys-473 coordinates heme.

Belongs to the cytochrome P450 family. The cofactor is heme.

The protein localises to the membrane. Together with an NADPH cytochrome P450 the enzyme system catalyzes the terminal hydroxylation as the first step in the assimilation of alkanes and fatty acids. The polypeptide is Cytochrome P450 52A5 (CYP52A5) (Candida maltosa (Yeast)).